Here is a 240-residue protein sequence, read N- to C-terminus: ATP synthase subunit a (240 aa).

Transmembrane regions (helical) follow at residues 41–61 (WLVM…LEII), 92–112 (FFPM…IGLI), 121–141 (SINT…VIGF), 152–172 (FIGP…ISNF), 191–211 (VLLG…PIMV), and 212–232 (LGVL…VVYF).

The protein belongs to the ATPase A chain family. F-type ATPases have 2 components, CF(1) - the catalytic core - and CF(0) - the membrane proton channel. CF(1) has five subunits: alpha(3), beta(3), gamma(1), delta(1), epsilon(1). CF(0) has three main subunits: a(1), b(2) and c(9-12). The alpha and beta chains form an alternating ring which encloses part of the gamma chain. CF(1) is attached to CF(0) by a central stalk formed by the gamma and epsilon chains, while a peripheral stalk is formed by the delta and b chains.

The protein localises to the cell inner membrane. Key component of the proton channel; it plays a direct role in the translocation of protons across the membrane. This Desulfotalea psychrophila (strain LSv54 / DSM 12343) protein is ATP synthase subunit a.